The following is a 335-amino-acid chain: Ornithine carbamoyltransferase, catabolic (335 aa).

Residues S59–T62, Q86, R110, and H137–Q140 contribute to the carbamoyl phosphate site. L-ornithine contacts are provided by residues N169, D233, and S237–M238. Residues C274–L275 and R319 contribute to the carbamoyl phosphate site.

Belongs to the aspartate/ornithine carbamoyltransferase superfamily. OTCase family.

It is found in the cytoplasm. The catalysed reaction is carbamoyl phosphate + L-ornithine = L-citrulline + phosphate + H(+). Its pathway is amino-acid degradation; L-arginine degradation via ADI pathway; carbamoyl phosphate from L-arginine: step 2/2. Reversibly catalyzes the transfer of the carbamoyl group from carbamoyl phosphate (CP) to the N(epsilon) atom of ornithine (ORN) to produce L-citrulline. This is Ornithine carbamoyltransferase, catabolic (arcB) from Bacillus licheniformis (strain ATCC 14580 / DSM 13 / JCM 2505 / CCUG 7422 / NBRC 12200 / NCIMB 9375 / NCTC 10341 / NRRL NRS-1264 / Gibson 46).